The chain runs to 322 residues: Acetyl-coenzyme A carboxylase carboxyl transferase subunit alpha (322 aa).

Positions 30–293 constitute a CoA carboxyltransferase C-terminal domain; the sequence is ALDISAEIAR…KQTLQESLRK (264 aa).

Belongs to the AccA family. As to quaternary structure, acetyl-CoA carboxylase is a heterohexamer composed of biotin carboxyl carrier protein (AccB), biotin carboxylase (AccC) and two subunits each of ACCase subunit alpha (AccA) and ACCase subunit beta (AccD).

It localises to the cytoplasm. It catalyses the reaction N(6)-carboxybiotinyl-L-lysyl-[protein] + acetyl-CoA = N(6)-biotinyl-L-lysyl-[protein] + malonyl-CoA. It participates in lipid metabolism; malonyl-CoA biosynthesis; malonyl-CoA from acetyl-CoA: step 1/1. Component of the acetyl coenzyme A carboxylase (ACC) complex. First, biotin carboxylase catalyzes the carboxylation of biotin on its carrier protein (BCCP) and then the CO(2) group is transferred by the carboxyltransferase to acetyl-CoA to form malonyl-CoA. The polypeptide is Acetyl-coenzyme A carboxylase carboxyl transferase subunit alpha (Nitrosomonas europaea (strain ATCC 19718 / CIP 103999 / KCTC 2705 / NBRC 14298)).